A 345-amino-acid chain; its full sequence is Phosphoribosylformylglycinamidine cyclo-ligase (345 aa).

This sequence belongs to the AIR synthase family.

The protein resides in the cytoplasm. It catalyses the reaction 2-formamido-N(1)-(5-O-phospho-beta-D-ribosyl)acetamidine + ATP = 5-amino-1-(5-phospho-beta-D-ribosyl)imidazole + ADP + phosphate + H(+). Its pathway is purine metabolism; IMP biosynthesis via de novo pathway; 5-amino-1-(5-phospho-D-ribosyl)imidazole from N(2)-formyl-N(1)-(5-phospho-D-ribosyl)glycinamide: step 2/2. In Pseudoalteromonas atlantica (strain T6c / ATCC BAA-1087), this protein is Phosphoribosylformylglycinamidine cyclo-ligase.